The chain runs to 108 residues: DNA-directed RNA polymerase III subunit RPC10 (108 aa).

Zn(2+)-binding residues include Cys5, Cys8, Cys25, Cys28, Cys69, and Cys72. A C4-type zinc finger spans residues 5–28 (CPGCGNGLIVEEGQRCHRFACNTC). The TFIIS-type zinc-finger motif lies at 65–107 (TAEPCPKCEHPRAYFMQLQTRYADEPMTTFYKCCNAQCGHRWR). Residues 88 to 89 (DE) carry the Hairpin motif. The Zn(2+) site is built by Cys98 and Cys102.

Belongs to the archaeal RpoM/eukaryotic RPA12/RPB9/RPC11 RNA polymerase family. Component of the RNA polymerase III complex consisting of 17 subunits: a ten-subunit horseshoe-shaped catalytic core composed of POLR3A/RPC1, POLR3B/RPC2, POLR1C/RPAC1, POLR1D/RPAC2, POLR3K/RPC10, POLR2E/RPABC1, POLR2F/RPABC2, POLR2H/RPABC3, POLR2K/RPABC4 and POLR2L/RPABC5; a mobile stalk composed of two subunits POLR3H/RPC8 and CRCP/RPC9, protruding from the core and functioning primarily in transcription initiation; and additional subunits homologous to general transcription factors of the RNA polymerase II machinery, POLR3C/RPC3-POLR3F/RPC6-POLR3G/RPC7 heterotrimer required for transcription initiation and POLR3D/RPC4-POLR3E/RPC5 heterodimer involved in both transcription initiation and termination.

The protein localises to the nucleus. Its function is as follows. Core component of RNA polymerase III (Pol III) which synthesizes small non-coding RNAs using the four ribonucleoside triphosphates as substrates. Can mediate Pol I proofreading of the nascent RNA transcript. Anchors into the Pol III active site to constantly monitor transcription fidelity, cleaves mis-incorporated 5'-ribonucleotides and restarts the transcription process. Once Pol III reaches the poly(dT) termination signal, can induce Pol III clamp opening and transcription termination. Pol III plays an important role in sensing and limiting infection by intracellular bacteria and DNA viruses. Acts as a nuclear and cytosolic DNA sensor involved in innate immune response. Can sense non-self dsDNA that serves as template for transcription into dsRNA. The non-self RNA polymerase III transcripts, such as Epstein-Barr virus-encoded RNAs (EBERs) induce type I interferon and NF-kappa-B through the RIG-I pathway. The sequence is that of DNA-directed RNA polymerase III subunit RPC10 (POLR3K) from Bos taurus (Bovine).